Reading from the N-terminus, the 1331-residue chain is ABC multidrug transporter MDR2 (1331 aa).

2 stretches are compositionally biased toward basic and acidic residues: residues 1–20 (MVEVSEKPNTQDDGVSKQEN) and 31–41 (SDKEKVAKKGN). Positions 1–51 (MVEVSEKPNTQDDGVSKQENRNPASSSSSTSDKEKVAKKGNSDATKSSTPE) are disordered. 4 consecutive transmembrane segments (helical) span residues 93–113 (MIFLAIVSLASIAAGAALPLF), 147–167 (YFVYLGIAQFILLYVSTVGFI), 219–239 (KVGLTLTALSTFFSAFIIGYV), and 242–262 (WKLALICSSTIVAMILVMGGI). The ABC transmembrane type-1 1 domain occupies 97 to 387 (AIVSLASIAA…VAPNTQAFAS (291 aa)). N-linked (GlcNAc...) asparagine glycosylation occurs at Asn-293. A run of 2 helical transmembrane segments spans residues 325-345 (LGIMFGSMMAIMYSNYGLGFW) and 358-378 (LSAIVNILLAIVIGSFSIGNV). In terms of domain architecture, ABC transporter 1 spans 422 to 667 (IEFRGIKHIY…KGTYLQLVEA (246 aa)). 457 to 464 (GPSGSGKS) contacts ATP. 2 N-linked (GlcNAc...) asparagine glycosylation sites follow: Asn-529 and Asn-737. 2 helical membrane-spanning segments follow: residues 762–782 (LCGFFFAVLSGAGQPVQSVFF) and 810–830 (FLMLGLVQLVTQSAQGVIFAI). Residues 764–1051 (GFFFAVLSGA…VFSFSPDMGK (288 aa)) form the ABC transmembrane type-1 2 domain. N-linked (GlcNAc...) asparagine glycosylation is present at Asn-860. A run of 4 helical transmembrane segments spans residues 884–904 (LGTILMVSTTLIVALTVALAF), 910–930 (LVCISTVPVLLLCGFYRFWIL), 995–1015 (ASQSFSFFCLALGFWYGGGLL), and 1025–1045 (FFLCISCVIFGSQSAGIVFSF). Residues 1086 to 1324 (IEFRDVHFRY…KGRYYELVHM (239 aa)) form the ABC transporter 2 domain. The N-linked (GlcNAc...) asparagine glycan is linked to Asn-1108. Residue 1121–1128 (GPSGCGKS) participates in ATP binding.

This sequence belongs to the ABC transporter superfamily. ABCB family. Multidrug resistance exporter (TC 3.A.1.201) subfamily.

It localises to the cell membrane. The enzyme catalyses itraconazole(in) + ATP + H2O = itraconazole(out) + ADP + phosphate + H(+). In terms of biological role, pleiotropic ABC efflux transporter that may be involved in the modulation susceptibility to a wide range of unrelated cytotoxic compounds. This is ABC multidrug transporter MDR2 from Trichophyton equinum (strain ATCC MYA-4606 / CBS 127.97) (Horse ringworm fungus).